Here is a 174-residue protein sequence, read N- to C-terminus: Negative modulator of initiation of replication (174 aa).

The protein belongs to the SeqA family. As to quaternary structure, homodimer. Polymerizes to form helical filaments.

Its subcellular location is the cytoplasm. Functionally, negative regulator of replication initiation, which contributes to regulation of DNA replication and ensures that replication initiation occurs exactly once per chromosome per cell cycle. Binds to pairs of hemimethylated GATC sequences in the oriC region, thus preventing assembly of replication proteins and re-initiation at newly replicated origins. Repression is relieved when the region becomes fully methylated. In Pseudoalteromonas atlantica (strain T6c / ATCC BAA-1087), this protein is Negative modulator of initiation of replication.